The following is a 150-amino-acid chain: 3-hydroxyacyl-[acyl-carrier-protein] dehydratase FabZ (150 aa).

The active site involves His-54.

This sequence belongs to the thioester dehydratase family. FabZ subfamily.

Its subcellular location is the cytoplasm. It catalyses the reaction a (3R)-hydroxyacyl-[ACP] = a (2E)-enoyl-[ACP] + H2O. Its function is as follows. Involved in unsaturated fatty acids biosynthesis. Catalyzes the dehydration of short chain beta-hydroxyacyl-ACPs and long chain saturated and unsaturated beta-hydroxyacyl-ACPs. This chain is 3-hydroxyacyl-[acyl-carrier-protein] dehydratase FabZ, found in Vibrio atlanticus (strain LGP32) (Vibrio splendidus (strain Mel32)).